The sequence spans 442 residues: Syndecan-3 (442 aa).

2 disordered regions span residues 1–24 (MKPG…AAAG) and 57–87 (RPVD…SGYF). Residues 1–387 (MKPGPPHRAG…SILERKEVLV (387 aa)) lie on the Extracellular side of the membrane. Residues 13–24 (HGAGAGAGAAAG) are compositionally biased toward gly residues. Residues 63-77 (GSGDDDSFPDDELDD) are compositionally biased toward acidic residues. O-linked (Xyl...) (glycosaminoglycan) serine glycosylation is found at serine 80, serine 82, serine 84, and serine 91. O-linked (GalNAc) serine; by GALNT13 glycosylation occurs at serine 108. O-linked (GalNAc) threonine; by GALNT13 glycans are attached at residues threonine 109 and threonine 110. 3 disordered regions span residues 150 to 173 (EEPS…STGD), 225 to 326 (TTPE…ETTQ), and 340 to 367 (AAKA…AIDS). Low complexity-rich tracts occupy residues 156–173 (ATTV…STGD), 225–238 (TTPE…TAAV), and 275–286 (TLPLGTTAPGPT). O-linked (GalNAc) serine; by GALNT13 glycosylation is present at serine 160. 3 O-linked (GalNAc) threonine; by GALNT13 glycosylation sites follow: threonine 161, threonine 162, and threonine 169. O-linked (GalNAc) serine; by GALNT13 glycosylation is present at serine 170. The O-linked (GalNAc) threonine; by GALNT13 glycan is linked to threonine 171. A compositionally biased stretch (polar residues) spans 288–299 (VAQTPTPETFLT). O-linked (Xyl...) (glycosaminoglycan) serine glycans are attached at residues serine 314 and serine 367. Residues 388-408 (AVIVGGVVGALFAAFLVTLLI) traverse the membrane as a helical segment. Phosphotyrosine occurs at positions 409, 419, 431, and 441. Residues 409–442 (YRMKKKDEGSYTLEEPKQASVTYQKPDKQEEFYA) are Cytoplasmic-facing. Residues 419–442 (YTLEEPKQASVTYQKPDKQEEFYA) are disordered. The segment covering 433–442 (KPDKQEEFYA) has biased composition (basic and acidic residues).

This sequence belongs to the syndecan proteoglycan family. In terms of assembly, interacts with TIAM1. Interacts with PTN (via heparan sulfate chains); this interaction mediates the neurite outgrowth-promoting signal from PTN to the cytoskeleton of growing neurites; this interaction mediates osteoblast recruitment. Interacts with MDK; this interaction induces SDC3 clustering; this interaction induces neuronal cell adhesion and neurite outgrowth. In terms of processing, O-glycosylated within the Thr/Ser-rich region which could interact with lectin domains on other molecules. As to expression, expressed in the nervous system, the adrenal gland, and the spleen.

It localises to the cell membrane. In terms of biological role, cell surface proteoglycan that may bear heparan sulfate. May have a role in the organization of cell shape by affecting the actin cytoskeleton, possibly by transferring signals from the cell surface in a sugar-dependent mechanism. The polypeptide is Syndecan-3 (SDC3) (Homo sapiens (Human)).